A 290-amino-acid chain; its full sequence is 30 kDa spicule matrix protein alpha (290 aa).

The N-terminal stretch at 1-20 (MRGFVYVLVCVLALASFSRA) is a signal peptide. One can recognise a C-type lectin domain in the interval 92-162 (ANMYCGQMHP…YTNWERMTAP (71 aa)). Asn-102 is a glycosylation site (N-linked (GlcNAc...) asparagine).

Accumulates exclusively in mineralized tissues.

Functionally, matrix protein of the sea urchin embryo spicule. The function of the matrix proteins is to direct crystal growth in certain orientations and inhibit growth in others. The sequence is that of 30 kDa spicule matrix protein alpha (SM30A) from Strongylocentrotus purpuratus (Purple sea urchin).